Reading from the N-terminus, the 578-residue chain is MACGFRRAIACQLSRVLNLPPENLITSISAVPISQKEEVADFQLSVDSLLEKDNDHSRPDIQVQAKRLAEKLRCDTVVSEISTGQRTVNFKINRELLTKTVLQQVIEDGSKYGLKSELFSGLPQKKIVVEFSSPNVAKKFHVGHLRSTIIGNFIANLKEALGHQVIRINYLGDWGMQFGLLGTGFQLFGYEEKLQSNPLQHLFEVYVQVNKEAADDKSVAKAAQEFFQRLELGDVQALSLWQKFRDLSIEEYIRVYKRLGVYFDEYSGESFYREKSQEVLKLLESKGLLLKTIKGTAVVDLSGNGDPSSICTVMRSDGTSLYATRDLAAAIDRMDKYNFDTMIYVTDKGQKKHFQQVFQMLKIMGYDWAERCQHVPFGVVQGMKTRRGDVTFLEDVLNEIQLRMLQNMASIKTTKELKNPQETAERVGLAALIIQDFKGLLLSDYKFSWDRVFQSRGDTGVFLQYTHARLHSLEETFGCGYLNDFNTACLQEPQSVSILQHLLRFDEVLYKSSQDFQPRHIVSYLLTLSHLAAVAHKTLQIKDSPPEVAGARLHLFKAVRSVLANGMKLLGITPVCRM.

The N-terminal 16 residues, Met1–Val16, are a transit peptide targeting the mitochondrion. L-arginine-binding positions include Ser133–Asn135, His144, Tyr322, Asp326, and Gln350. Residues Ser133–His144 carry the 'HIGH' region motif. Lys568 is subject to N6-acetyllysine.

Belongs to the class-I aminoacyl-tRNA synthetase family.

It is found in the mitochondrion membrane. It catalyses the reaction tRNA(Arg) + L-arginine + ATP = L-arginyl-tRNA(Arg) + AMP + diphosphate. Catalyzes the attachment of arginine to tRNA(Arg) in a two-step reaction: arginine is first activated by ATP to form Arg-AMP and then transferred to the acceptor end of tRNA(Arg). In Homo sapiens (Human), this protein is Probable arginine--tRNA ligase, mitochondrial (RARS2).